The following is a 319-amino-acid chain: Chromoplast-specific carotenoid-associated protein C2, chromoplastic (319 aa).

The N-terminal 55 residues, 1–55, are a transit peptide targeting the chromoplast; that stretch reads MTSIAFCNAFTVNPFLAAARRSPPPLTPLTSVALSPARKPRILAIFHPRTFPSFR.

Belongs to the PAP/fibrillin family.

It is found in the plastid. The protein resides in the chromoplast. Its function is as follows. May be involved in carotenoid sequestration within chromoplasts. This Oncidium hybrid cultivar (Orchid) protein is Chromoplast-specific carotenoid-associated protein C2, chromoplastic (CHRC2).